We begin with the raw amino-acid sequence, 328 residues long: 4-hydroxythreonine-4-phosphate dehydrogenase (328 aa).

Substrate is bound by residues H130 and T131. Positions 163, 208, and 263 each coordinate a divalent metal cation. Substrate contacts are provided by K271, N280, and R289.

This sequence belongs to the PdxA family. Homodimer. Zn(2+) is required as a cofactor. The cofactor is Mg(2+). Co(2+) serves as cofactor.

It localises to the cytoplasm. It carries out the reaction 4-(phosphooxy)-L-threonine + NAD(+) = 3-amino-2-oxopropyl phosphate + CO2 + NADH. It functions in the pathway cofactor biosynthesis; pyridoxine 5'-phosphate biosynthesis; pyridoxine 5'-phosphate from D-erythrose 4-phosphate: step 4/5. Its function is as follows. Catalyzes the NAD(P)-dependent oxidation of 4-(phosphooxy)-L-threonine (HTP) into 2-amino-3-oxo-4-(phosphooxy)butyric acid which spontaneously decarboxylates to form 3-amino-2-oxopropyl phosphate (AHAP). The chain is 4-hydroxythreonine-4-phosphate dehydrogenase from Burkholderia vietnamiensis (strain G4 / LMG 22486) (Burkholderia cepacia (strain R1808)).